The chain runs to 239 residues: tRNA (guanine-N(7)-)-methyltransferase (239 aa).

Residues glutamate 69, glutamate 94, aspartate 121, and aspartate 144 each contribute to the S-adenosyl-L-methionine site. Aspartate 144 is an active-site residue. A substrate-binding site is contributed by lysine 148. Residues 150–155 (RHNKRR) form an interaction with RNA region. Substrate contacts are provided by residues aspartate 180 and 217–220 (TKFE).

This sequence belongs to the class I-like SAM-binding methyltransferase superfamily. TrmB family. As to quaternary structure, monomer.

The enzyme catalyses guanosine(46) in tRNA + S-adenosyl-L-methionine = N(7)-methylguanosine(46) in tRNA + S-adenosyl-L-homocysteine. Its pathway is tRNA modification; N(7)-methylguanine-tRNA biosynthesis. Catalyzes the formation of N(7)-methylguanine at position 46 (m7G46) in tRNA. The protein is tRNA (guanine-N(7)-)-methyltransferase of Salmonella paratyphi A (strain ATCC 9150 / SARB42).